Here is a 713-residue protein sequence, read N- to C-terminus: Probable 1-deoxy-D-xylulose-5-phosphate synthase 2, chloroplastic (713 aa).

The N-terminal 30 residues, 1 to 30 (MALQASSSPSMFRAIPTNTNASCRRKLQVR), are a transit peptide targeting the chloroplast. Thiamine diphosphate contacts are provided by residues His-140 and 181–183 (GHS). Position 212 (Asp-212) interacts with Mg(2+). Thiamine diphosphate contacts are provided by residues 213-214 (GA), Asn-241, Tyr-362, and Glu-444. A Mg(2+)-binding site is contributed by Asn-241.

Belongs to the transketolase family. DXPS subfamily. Homodimer. Requires Mg(2+) as cofactor. It depends on thiamine diphosphate as a cofactor.

Its subcellular location is the plastid. The protein localises to the chloroplast. The enzyme catalyses D-glyceraldehyde 3-phosphate + pyruvate + H(+) = 1-deoxy-D-xylulose 5-phosphate + CO2. It functions in the pathway metabolic intermediate biosynthesis; 1-deoxy-D-xylulose 5-phosphate biosynthesis; 1-deoxy-D-xylulose 5-phosphate from D-glyceraldehyde 3-phosphate and pyruvate: step 1/1. Its function is as follows. Catalyzes the acyloin condensation reaction between C atoms 2 and 3 of pyruvate and glyceraldehyde 3-phosphate to yield 1-deoxy-D-xylulose-5-phosphate (DXP). Is a limiting enzyme for plastidic isoprenoid biosynthesis and essential for chloroplast development. In Oryza sativa subsp. japonica (Rice), this protein is Probable 1-deoxy-D-xylulose-5-phosphate synthase 2, chloroplastic.